A 348-amino-acid polypeptide reads, in one-letter code: tRNA N6-adenosine threonylcarbamoyltransferase (348 aa).

Positions 118 and 122 each coordinate Fe cation. Substrate is bound by residues leucine 140–glycine 144, aspartate 173, glycine 186, aspartate 190, and asparagine 279. Aspartate 309 lines the Fe cation pocket.

The protein belongs to the KAE1 / TsaD family. It depends on Fe(2+) as a cofactor.

The protein localises to the cytoplasm. It catalyses the reaction L-threonylcarbamoyladenylate + adenosine(37) in tRNA = N(6)-L-threonylcarbamoyladenosine(37) in tRNA + AMP + H(+). Its function is as follows. Required for the formation of a threonylcarbamoyl group on adenosine at position 37 (t(6)A37) in tRNAs that read codons beginning with adenine. Is involved in the transfer of the threonylcarbamoyl moiety of threonylcarbamoyl-AMP (TC-AMP) to the N6 group of A37, together with TsaE and TsaB. TsaD likely plays a direct catalytic role in this reaction. The sequence is that of tRNA N6-adenosine threonylcarbamoyltransferase from Lactiplantibacillus plantarum (strain ATCC BAA-793 / NCIMB 8826 / WCFS1) (Lactobacillus plantarum).